Consider the following 990-residue polypeptide: Activator of stress genes protein 1 (990 aa).

Residues 1 to 88 (MPKREIEDTQ…NKPKSQENKR (88 aa)) form a disordered region. Residues 9-23 (TQSPYSSTGLVSTGE) are compositionally biased toward polar residues. Low complexity predominate over residues 24–61 (SPKTSTSTPTSSTNNRAATTTTNNTSTTSTSLLKSNSN). Residues 95 to 121 (CDTCRQKKVKCDGKQPCIHCTVYSYKC) constitute a DNA-binding region (zn(2)-C6 fungal-type). 3 stretches are compositionally biased toward low complexity: residues 160 to 179 (NNNS…QQHV), 282 to 293 (SFDDSSNSAVSS), and 773 to 793 (TATT…NSNS). 4 disordered regions span residues 160 to 192 (NNNS…PADE), 255 to 295 (QDPD…SSPR), 764 to 800 (RTAS…TLPA), and 915 to 944 (SNNN…NGVA).

The protein belongs to the ASG1 family.

The protein resides in the nucleus. In terms of biological role, transcription factor necessary to sustain growth on non-fermentative carbon sources such as sodium acetate, acetic acid, or ethanol. Plays a role in hyphal formation. This chain is Activator of stress genes protein 1 (ASG1), found in Candida albicans (strain SC5314 / ATCC MYA-2876) (Yeast).